The chain runs to 417 residues: Serine hydroxymethyltransferase (417 aa).

(6S)-5,6,7,8-tetrahydrofolate-binding positions include Leu121 and 125-127 (GHL). Lys229 carries the N6-(pyridoxal phosphate)lysine modification. Position 355–357 (355–357 (SPF)) interacts with (6S)-5,6,7,8-tetrahydrofolate.

Belongs to the SHMT family. In terms of assembly, homodimer. Pyridoxal 5'-phosphate is required as a cofactor.

It is found in the cytoplasm. It carries out the reaction (6R)-5,10-methylene-5,6,7,8-tetrahydrofolate + glycine + H2O = (6S)-5,6,7,8-tetrahydrofolate + L-serine. Its pathway is one-carbon metabolism; tetrahydrofolate interconversion. The protein operates within amino-acid biosynthesis; glycine biosynthesis; glycine from L-serine: step 1/1. Catalyzes the reversible interconversion of serine and glycine with tetrahydrofolate (THF) serving as the one-carbon carrier. This reaction serves as the major source of one-carbon groups required for the biosynthesis of purines, thymidylate, methionine, and other important biomolecules. Also exhibits THF-independent aldolase activity toward beta-hydroxyamino acids, producing glycine and aldehydes, via a retro-aldol mechanism. The sequence is that of Serine hydroxymethyltransferase from Salmonella choleraesuis (strain SC-B67).